A 356-amino-acid chain; its full sequence is Alpha-N-acetylneuraminide alpha-2,8-sialyltransferase (356 aa).

At 1 to 29 (MSPCGRARRQTSRGAMAVLAWKFPRTRLP) the chain is on the cytoplasmic side. The helical; Signal-anchor for type II membrane protein transmembrane segment at 30–48 (MGASALCVVVLCWLYIFPV) threads the bilayer. Over 49–356 (YRLPNEKEIV…CEDTSLQPTS (308 aa)) the chain is Lumenal. Residues N71 and N119 are each glycosylated (N-linked (GlcNAc...) asparagine). 2 cysteine pairs are disulfide-bonded: C138–C287 and C152–C347. Residues N143 and N166 each coordinate CMP-N-acetyl-beta-neuraminate. N-linked (GlcNAc...) asparagine glycosylation is found at N214 and N245. 5 residues coordinate CMP-N-acetyl-beta-neuraminate: S274, T275, G276, W296, and H310. Residue H322 is the Proton donor/acceptor of the active site.

This sequence belongs to the glycosyltransferase 29 family. Strongly expressed in melanoma cell lines, adult and fetal brain and to a lesser extent in adult and fetal lung.

It is found in the golgi apparatus membrane. It carries out the reaction an N-acetyl-alpha-neuraminyl-(2-&gt;3)-beta-D-galactosyl derivative + CMP-N-acetyl-beta-neuraminate = an N-acetyl-alpha-neuraminyl-(2-&gt;8)-N-acetyl-alpha-neuraminyl-(2-&gt;3)-beta-D-galactosyl derivative + CMP + H(+). The catalysed reaction is a ganglioside GM3 (d18:1(4E)) + CMP-N-acetyl-beta-neuraminate = a ganglioside GD3 (d18:1(4E)) + CMP + H(+). It catalyses the reaction a ganglioside GD3 (d18:1(4E)) + CMP-N-acetyl-beta-neuraminate = a ganglioside GT3 (d18:1(4E)) + CMP + H(+). The enzyme catalyses a ganglioside GD1a (d18:1(4E)) + CMP-N-acetyl-beta-neuraminate = a ganglioside GT1a (d18:1(4E)) + CMP + H(+). It carries out the reaction a ganglioside GT1b (d18:1(4E)) + CMP-N-acetyl-beta-neuraminate = a ganglioside GQ1b (d18:1(4E)) + CMP + H(+). The catalysed reaction is a ganglioside GM1b (d18:1(4E)) + CMP-N-acetyl-beta-neuraminate = a ganglioside GD1c (d18:1(4E)) + CMP + H(+). It catalyses the reaction a ganglioside GD3 + CMP-N-acetyl-beta-neuraminate = a ganglioside GT3 + CMP + H(+). The enzyme catalyses [alpha-N-acetylneuraminyl-(2-&gt;8)](n)-alpha-N-acetylneuraminyl-(2-&gt;8)-alpha-N-acetylneuraminyl-(2-&gt;3)-beta-D-galactosyl-(1-&gt;4)-beta-D-glucosyl-(1&lt;-&gt;1)-ceramide + CMP-N-acetyl-beta-neuraminate = [alpha-N-acetylneuraminyl-(2-&gt;8)](n+1)-alpha-N-acetylneuraminyl-(2-&gt;8)-alpha-N-acetylneuraminyl-(2-&gt;3)-beta-D-galactosyl-(1-&gt;4)-beta-D-glucosyl-(1&lt;-&gt;1)-ceramide + CMP + H(+). Its pathway is protein modification; protein glycosylation. It participates in lipid metabolism; sphingolipid metabolism. In terms of biological role, catalyzes the addition of sialic acid in alpha 2,8-linkage to the sialic acid moiety of the ganglioside GM3 to form ganglioside GD3; gangliosides are a subfamily of complex glycosphingolipds that contain one or more residues of sialic acid. Can catalyze the addition of a second alpha-2,8-sialic acid to GD3 to form GT3. Can use GM1b, GD1a and GT1b as acceptor substrates to synthesize GD1c, GT1a and GQ1b respectively. Can synthesize unusual tetra- and pentasialylated lactosylceramide derivatives identified as GQ3 (II3Neu5Ac4-Gg2Cer) and GP3 (II3Neu5Ac5-Gg2Cer) in breast cancer cells. The polypeptide is Alpha-N-acetylneuraminide alpha-2,8-sialyltransferase (Homo sapiens (Human)).